We begin with the raw amino-acid sequence, 3132 residues long: Toxin CdiA (3132 aa).

The segment at residues 1–32 is a signal peptide (signal); that stretch reads MHQPPVRFTYRLLSYLVSAIIAGQPLLPAVGA. Positions 36 to 322 are two-partner system transport domain (TPS); the sequence is PQNGAGMDKA…AGGNLSVTGT (287 aa). Positions 351-1378 are FHA-1; the sequence is GELTAGQNAM…ITMNTAHLLN (1028 aa). Positions 1379 to 1635 are receptor-binding domain (RBD); that stretch reads SWDAISASHE…LSLSGASVSS (257 aa). Positions 1636–1820 are YP domain; that stretch reads YPLPSGNNGY…LSPEDITLHN (185 aa). The tract at residues 1821–1859 is periplasmic FHA-1 repeat (pFR); the sequence is GSVISGNNVQLAGGNITNSGSSINAQNDLLLDRTGSIDN. An FHA-2 region spans residues 1930-2526; sequence RATDSLFMGA…QDSDRYDSRQ (597 aa). Disordered stretches follow at residues 2195 to 2228 and 2456 to 2497; these read TGTGGIGFTTGSSKTTHDRREAGTTQSQSASTIG and AGIN…SGAQ. Composition is skewed to polar residues over residues 2217 to 2228 and 2483 to 2497; these read GTTQSQSASTIG and VSLTSGRDTTLSGAQ. Positions 2862 to 2904 are pre-toxin (PT) domain; it reads DNLSEQERQQISMLATIASGIAGGLVGNSTSAAGTGAQAGRNS. Positions 2905–2908 match the VENN CT cleavage motif motif; the sequence is VENN. Positions 2909–3121 are C-terminal effector domain (CT); sequence AMSGLEGFGT…IGTVTDYQIE (213 aa).

This sequence in the N-terminal section; belongs to the CdiA toxin family. Probably interacts with cognate immunity protein CdiI. Expressed as 303 kDa protein which can be processed to 284 kDa and 195 kDa forms.

The protein localises to the secreted. Its subcellular location is the target cell. It is found in the target cell cytoplasm. In terms of biological role, toxic component of a toxin-immunity protein module, which functions as a cellular contact-dependent growth inhibition (CDI) system. CDI modules allow bacteria to communicate with and inhibit the growth of closely related neighboring bacteria (target cell counts decrease 1000- to 10(5)-fold) in a contact-dependent fashion. Inhibitory cells must be in logarithmic (not stationary) phase to inhibit growth of their targets, but protein synthesis is not necessary. The presence of P or S but not type 1 pili protects the target cells against growth inhibition for this CDI. BamA on the outer membrane of target cells acts as a receptor for CdiA, while target cell multidrug efflux pump AcrB facilitates its transport into the cytoplasm. Outer membrane receptor function is dependent on extracellular loops of BamA. Cells undergoing CDI show a 2- to 5-fold reversible decrease in aerobic respiration, proton motive force and steady-state ATP levels, suggesting this CT module is an ionophore that disrupts the target cell's inner cell membrane. Growth recovery requires an energy source. Cells expressing this protein in the absence of CdiI initially form filaments, some of which contain multiple nucleoids, while others are devoid of nucleoids. CDI cells induce the phage shock response, but pspA is not required for recovery from CDI. CDI is neutralized by its cognate immunity protein CdiI, but not by non-cognate CdiI from other bacteria with different CDI systems. Plays a role in biofilm formation, a region N-terminal to residue 644 is implicated in this receptor-independent cell adhesion. The CdiA protein is thought to be exported from the cell through the central lumen of CdiB, the other half of its two-partner system (TPS). The TPS domain probably remains associated with CdiB while the FHA-1 domain forms an extended filament (33 nm long) with the receptor-binding domain (RBD) at its extremity; in the secretion arrested state the C-terminus of the RBD and YP domains form a hairpin-like structure as the FHA-2, PT and CT domains are periplasmic. The YP domain is probably responsible for this arrest at the point where it re-enters the host cell periplasm. Upon binding to a target cell outer membrane receptor (BamA for this CDI) a signal is transmitted to activate secretion. The filament becomes about 5 nm longer, the rest of CdiA is secreted and the FHA-2 domain becomes stably associated with the target cell's outer membrane where it facilitates entry of the toxic CT domain into the target cell periplasm. From there the toxic CT domain is cleaved and gains access to the target cell cytoplasm via an inner membrane protein (multidrug efflux pump AcrB for this CDI). This Escherichia coli protein is Toxin CdiA.